A 403-amino-acid chain; its full sequence is Alkaline protease 1 (403 aa).

An N-terminal signal peptide occupies residues 1 to 21; it reads MQSIKRTLLLLGALLPAALAA. A propeptide spanning residues 22 to 125 is cleaved from the precursor; that stretch reads PAREPHPSSN…QIWYLDALTT (104 aa). The Inhibitor I9 domain occupies 36–120; the sequence is KYIITFKSGI…HVEEDQIWYL (85 aa). The Peptidase S8 domain maps to 130-403; sequence PWGLGSISHK…PNKLAYNGAA (274 aa). Active-site charge relay system residues include D162 and H193. Residues N253 and N307 are each glycosylated (N-linked (GlcNAc...) asparagine). Catalysis depends on S349, which acts as the Charge relay system.

The protein belongs to the peptidase S8 family.

The protein localises to the secreted. The catalysed reaction is Hydrolysis of proteins with broad specificity, and of Bz-Arg-OEt &gt; Ac-Tyr-OEt. Does not hydrolyze peptide amides.. Functionally, secreted alkaline protease that allows assimilation of proteinaceous substrates. The sequence is that of Alkaline protease 1 (alp1) from Aspergillus clavatus (strain ATCC 1007 / CBS 513.65 / DSM 816 / NCTC 3887 / NRRL 1 / QM 1276 / 107).